A 139-amino-acid chain; its full sequence is Cytochrome c-type biogenesis protein CcmE 2 (139 aa).

Topologically, residues 1-9 (MASLKKSRR) are cytoplasmic. Residues 10–30 (VRLILFSGVALVSATALIGYA) traverse the membrane as a helical; Signal-anchor for type II membrane protein segment. Residues 31–139 (MRDGIQFFRT…ELAEMEALRD (109 aa)) lie on the Periplasmic side of the membrane. Histidine 122 and tyrosine 126 together coordinate heme.

The protein belongs to the CcmE/CycJ family.

The protein localises to the cell inner membrane. Its function is as follows. Heme chaperone required for the biogenesis of c-type cytochromes. Transiently binds heme delivered by CcmC and transfers the heme to apo-cytochromes in a process facilitated by CcmF and CcmH. The protein is Cytochrome c-type biogenesis protein CcmE 2 of Ruegeria pomeroyi (strain ATCC 700808 / DSM 15171 / DSS-3) (Silicibacter pomeroyi).